Consider the following 541-residue polypeptide: Thioredoxin reductase (541 aa).

FAD-binding positions include 51-52, 71-74, 87-88, 92-96, alanine 161, aspartate 357, and 364-366; these read PG, DYVK, TC, GCVPK, and ELA. An intrachain disulfide couples cysteine 88 to cysteine 93. The segment at 438 to 452 is loop important for the interaction with TRX1; the sequence is HRQKHIRAQKDEYDL. Residue histidine 509 coordinates FAD. Histidine 509 acts as the Proton acceptor in catalysis. Residues cysteine 535 and cysteine 540 are joined by a disulfide bond.

The protein belongs to the class-I pyridine nucleotide-disulfide oxidoreductase family. Homodimer. It depends on FAD as a cofactor.

Its subcellular location is the cytoplasm. It catalyses the reaction [thioredoxin]-dithiol + NADP(+) = [thioredoxin]-disulfide + NADPH + H(+). In terms of biological role, catalyzes the transfer of electrons from NADPH to thioredoxins TRX1, TRX2 and TRX3, which in turn act as reductants of disulfide containing proteins. Able to reduce nitroglutathione (GSNO), a compound involved in the transport of nitric oxide (NO); however, TRX1 is more efficient in reducing GSNO. Has no catalytic activity towards oxidized glutathione (GSSG). This is Thioredoxin reductase from Plasmodium falciparum (isolate FCH-5).